Reading from the N-terminus, the 499-residue chain is Uridine-cytidine kinase A (499 aa).

Positions 1–44 (MSDNSTTKVTTNDSPSLTTTTSTTTAPTTTTTTTTTPTHNHDTT) are disordered. Over residues 10-38 (TTNDSPSLTTTTSTTTAPTTTTTTTTTPT) the composition is skewed to low complexity. Position 78–85 (78–85 (GGSASGKT)) interacts with ATP.

Belongs to the uridine kinase family.

The enzyme catalyses uridine + ATP = UMP + ADP + H(+). The catalysed reaction is cytidine + ATP = CMP + ADP + H(+). The protein operates within pyrimidine metabolism; CTP biosynthesis via salvage pathway; CTP from cytidine: step 1/3. Its pathway is pyrimidine metabolism; UMP biosynthesis via salvage pathway; UMP from uridine: step 1/1. In terms of biological role, catalyzes the conversion of uridine into uridine monophosphate and cytidine into cytidine monophosphate in the pyrimidine salvage pathway. This is Uridine-cytidine kinase A (udkA) from Dictyostelium discoideum (Social amoeba).